A 620-amino-acid chain; its full sequence is Chaperone protein HtpG (620 aa).

The a; substrate-binding stretch occupies residues 1-334; the sequence is MTTTDTAPQS…SEDLPLNLSR (334 aa). Residues 335-548 are b; sequence EMLQNNPQLA…GLGPDRALER (214 aa). The interval 549-620 is c; that stretch reads MLAQQNRGAA…RLNRLVLRAL (72 aa).

Belongs to the heat shock protein 90 family. Homodimer.

The protein localises to the cytoplasm. Its function is as follows. Molecular chaperone. Has ATPase activity. This chain is Chaperone protein HtpG, found in Rhodopseudomonas palustris (strain BisB18).